A 228-amino-acid chain; its full sequence is Ureidoacrylate amidohydrolase RutB (228 aa).

The active-site Proton acceptor is the aspartate 23. Lysine 132 is a catalytic residue. Catalysis depends on cysteine 165, which acts as the Nucleophile.

The protein belongs to the isochorismatase family. RutB subfamily.

It catalyses the reaction (Z)-3-ureidoacrylate + H2O + H(+) = (Z)-3-aminoacrylate + NH4(+) + CO2. It carries out the reaction (Z)-3-ureidoacrylate + H2O = (Z)-3-aminoacrylate + carbamate + H(+). The enzyme catalyses (Z)-2-methylureidoacrylate + H2O + H(+) = (Z)-2-methylaminoacrylate + NH4(+) + CO2. In terms of biological role, hydrolyzes ureidoacrylate to form aminoacrylate and carbamate. The carbamate hydrolyzes spontaneously, thereby releasing one of the nitrogen atoms of the pyrimidine ring as ammonia and one of its carbon atoms as CO2. This is Ureidoacrylate amidohydrolase RutB from Agrobacterium fabrum (strain C58 / ATCC 33970) (Agrobacterium tumefaciens (strain C58)).